The chain runs to 617 residues: KIF-binding protein (617 aa).

A disordered region spans residues 48-83; the sequence is ALLGPAPEDEDEPAADDGPGDQALGAGEPREAEGPG. The span at 54–66 shows a compositional bias: acidic residues; it reads PEDEDEPAADDGP. A Phosphoserine modification is found at Ser-174.

The protein belongs to the KIF-binding protein family. In terms of assembly, interacts with KIF1B; positively regulates KIF1B microtubule motor activity. Interacts with STMN2. As to expression, in the embryo it is expressed in cortical neurons; expression increases during neuronal development.

It is found in the cytoplasm. The protein localises to the cytoskeleton. Its function is as follows. Activator of KIF1B plus-end-directed microtubule motor activity. Required for organization of axonal microtubules, and axonal outgrowth and maintenance during peripheral and central nervous system development. The protein is KIF-binding protein of Mus musculus (Mouse).